The chain runs to 498 residues: Protein flp (498 aa).

Helical transmembrane passes span 6 to 26 (LYFL…IYIT), 389 to 409 (FNIV…FSAY), 433 to 453 (LSLC…YLIL), and 471 to 491 (LALI…LLFL).

The protein localises to the cell membrane. Its precise function is unknown. Has no penicillin-binding activity and is not involved in methicillin resistance. This Staphylococcus aureus (strain NCTC 8325 / PS 47) protein is Protein flp (flp).